A 415-amino-acid polypeptide reads, in one-letter code: Phosphoglycerate kinase (415 aa).

Substrate-binding positions include 27–29 (DVN), Arg-44, 67–70 (HQGR), Arg-124, and Arg-164. ATP-binding positions include Glu-336 and 362-365 (GGHM).

Belongs to the phosphoglycerate kinase family. In terms of assembly, monomer.

It is found in the cytoplasm. The enzyme catalyses (2R)-3-phosphoglycerate + ATP = (2R)-3-phospho-glyceroyl phosphate + ADP. It participates in carbohydrate degradation; glycolysis; pyruvate from D-glyceraldehyde 3-phosphate: step 2/5. This is Phosphoglycerate kinase from Sulfolobus acidocaldarius (strain ATCC 33909 / DSM 639 / JCM 8929 / NBRC 15157 / NCIMB 11770).